The chain runs to 186 residues: Photosystem I assembly protein Ycf4 (186 aa).

Transmembrane regions (helical) follow at residues 22–42 and 57–77; these read FCWACILFLGSLGFLVVGTSS and IIFFPQGIVMSFYGIAGLFIS.

It belongs to the Ycf4 family.

The protein resides in the plastid. It localises to the chloroplast thylakoid membrane. Its function is as follows. Seems to be required for the assembly of the photosystem I complex. This is Photosystem I assembly protein Ycf4 from Dioscorea elephantipes (Elephant's foot yam).